We begin with the raw amino-acid sequence, 387 residues long: MDAGLKRELEQKVRSGERLTREDGIALYESDDLAWLGGLAHEVRTRKNGDVVHFNVNRHLNMTNVCTASCAYCSFQRKPGEKDAYTMRIEEAVKLAKAMEGENLTELHIVNGLHPNLPWRYYPRSLRELKAALPEVSLKAFTATEIHHFETISGMSASDILDELIDAGLESLTGGGAEIFDWEVRQHIVDHRTHWEDWSRIHRLAHEKGLKTPCTMLYGHIEEPRHRVDHVLRLRELQDETGGFQVFIPLRYQHDFVDMKDGKVRNRLQARTQMATGAEALKTFAVSRLLFDNVPHVKVFWVMHGVQTAQLALQHGADDMDGSVVEYKITHDADDFGTPNKLTREDLLDLIRDAGFRPVERNTRYEILREYEGPDPARRESPQPMRV.

In terms of domain architecture, Radical SAM core spans 52-279 (VHFNVNRHLN…ARTQMATGAE (228 aa)). The [4Fe-4S] cluster site is built by Cys-66, Cys-70, and Cys-73.

The protein belongs to the radical SAM superfamily. MqnE family. The cofactor is [4Fe-4S] cluster.

It catalyses the reaction 3-[(1-carboxyvinyl)-oxy]benzoate + S-adenosyl-L-methionine + H2O = 6-amino-6-deoxyfutalosine + hydrogencarbonate + L-methionine + H(+). The protein operates within quinol/quinone metabolism; menaquinone biosynthesis. In terms of biological role, radical SAM enzyme that catalyzes the addition of the adenosyl radical to the double bond of 3-[(1-carboxyvinyl)oxy]benzoate, leading to aminodeoxyfutalosine (AFL), a key intermediate in the formation of menaquinone (MK, vitamin K2) from chorismate. In Streptomyces coelicolor (strain ATCC BAA-471 / A3(2) / M145), this protein is Aminodeoxyfutalosine synthase.